Reading from the N-terminus, the 220-residue chain is Ras-related protein Rab-3A (220 aa).

S31, S32, V33, G34, K35, T36, S37, T48, P49, S53, and T54 together coordinate GTP. T36 lines the Mg(2+) pocket. The short motif at 49–58 is the Switch 1 element; sequence PAFVSTVGID. Residues T54 and D77 each coordinate Mg(2+). A GTP-binding site is contributed by G80. The Switch 2 signature appears at 80 to 96; sequence GQERYRTITTAYYRGAM. T86 carries the post-translational modification Phosphothreonine. GTP is bound by residues N135, K136, D138, A166, and K167. S188 and S190 each carry phosphoserine. The disordered stretch occupies residues 194–220; sequence ADPAVTGAKQGPQLTDQQAPPHQDCAC. S-geranylgeranyl cysteine attachment occurs at residues C218 and C220. C220 is modified (cysteine methyl ester).

The protein belongs to the small GTPase superfamily. Rab family. In terms of assembly, interacts with RIMS1 and RIMS2. Interacts with Rabphilin-3A/RPH3A and Rab effector Noc2/RPH3AL. Interacts with SYTL4. Interacts with RAB3IP. Interacts with SGSM1 and SGSM3. Interacts with SYT1. Interacts with MYH9; this interaction is essential for lysosome exocytosis and plasma membrane repair. Interacts with STXBP1; this interaction promotes RAB3A dissociation from the vesicle membrane. Interacts with SNCA. Interacts with GDI1, GDI2, CHM and CHML; phosphorylation at Thr-86 disrupts these interactions. Interacts with MADD (via uDENN domain); the GTP-bound form is preferred for interaction. It depends on Mg(2+) as a cofactor. In terms of processing, phosphorylation of Thr-86 in the switch II region by LRRK2 prevents the association of RAB regulatory proteins, including CHM, CHML and RAB GDP dissociation inhibitors GDI1 and GDI2.

Its subcellular location is the cytoplasm. It localises to the cytosol. It is found in the lysosome. The protein localises to the cytoplasmic vesicle. The protein resides in the secretory vesicle. Its subcellular location is the cell projection. It localises to the axon. It is found in the cell membrane. The protein localises to the presynapse. The protein resides in the postsynapse. It catalyses the reaction GTP + H2O = GDP + phosphate + H(+). Regulated by guanine nucleotide exchange factors (GEFs) including RAB3IL1 and MADD which promote the exchange of bound GDP for free GTP. Regulated by GTPase activating proteins (GAPs) including RAB3GAP1 and TBC1D10B which increase the GTP hydrolysis activity. Inhibited by GDP dissociation inhibitors (GDIs) which prevent Rab-GDP dissociation. Functionally, the small GTPases Rab are key regulators of intracellular membrane trafficking, from the formation of transport vesicles to their fusion with membranes. Rabs cycle between an inactive GDP-bound form and an active GTP-bound form that is able to recruit to membranes different sets of downstream effectors directly responsible for vesicle formation, movement, tethering and fusion. RAB3A plays a central role in regulated exocytosis and secretion. Controls the recruitment, tethering and docking of secretory vesicles to the plasma membrane. Upon stimulation, switches to its active GTP-bound form, cycles to vesicles and recruits effectors such as RIMS1, RIMS2, Rabphilin-3A/RPH3A, RPH3AL or SYTL4 to help the docking of vesicules onto the plasma membrane. Upon GTP hydrolysis by GTPase-activating protein, dissociates from the vesicle membrane allowing the exocytosis to proceed. Stimulates insulin secretion through interaction with RIMS2 or RPH3AL effectors in pancreatic beta cells. Regulates calcium-dependent lysosome exocytosis and plasma membrane repair (PMR) via the interaction with 2 effectors, SYTL4 and myosin-9/MYH9. Acts as a positive regulator of acrosome content secretion in sperm cells by interacting with RIMS1. Also plays a role in the regulation of dopamine release by interacting with synaptotagmin I/SYT. The polypeptide is Ras-related protein Rab-3A (RAB3A) (Sus scrofa (Pig)).